The primary structure comprises 475 residues: Methyltransferase-like protein 25B (475 aa).

A coiled-coil region spans residues 186–210 (QRLVERAQRLDQELLQTLEKEEKRN). Residues 406–426 (VVAFFSLALLLAPLVETLILL) form a helical membrane-spanning segment.

Belongs to the METTL25 family.

It localises to the membrane. The protein is Methyltransferase-like protein 25B of Bos taurus (Bovine).